Reading from the N-terminus, the 338-residue chain is tRNA-specific 2-thiouridylase MnmA (338 aa).

ATP-binding positions include 6–13 and methionine 32; that span reads ALSGGVDS. The Nucleophile role is filled by cysteine 92. Cysteine 92 and cysteine 186 are oxidised to a cystine. ATP is bound at residue glycine 116. The segment at 134–136 is interaction with tRNA; that stretch reads KDQ. Cysteine 186 (cysteine persulfide intermediate) is an active-site residue. The interval 288 to 289 is interaction with tRNA; it reads RY.

The protein belongs to the MnmA/TRMU family.

It is found in the cytoplasm. It carries out the reaction S-sulfanyl-L-cysteinyl-[protein] + uridine(34) in tRNA + AH2 + ATP = 2-thiouridine(34) in tRNA + L-cysteinyl-[protein] + A + AMP + diphosphate + H(+). Functionally, catalyzes the 2-thiolation of uridine at the wobble position (U34) of tRNA, leading to the formation of s(2)U34. This Campylobacter fetus subsp. fetus (strain 82-40) protein is tRNA-specific 2-thiouridylase MnmA.